The primary structure comprises 191 residues: Peptidyl-tRNA hydrolase (191 aa).

Position 14 (Y14) interacts with tRNA. H19 (proton acceptor) is an active-site residue. TRNA is bound by residues Y64, N66, and N112.

It belongs to the PTH family. As to quaternary structure, monomer.

Its subcellular location is the cytoplasm. The enzyme catalyses an N-acyl-L-alpha-aminoacyl-tRNA + H2O = an N-acyl-L-amino acid + a tRNA + H(+). Hydrolyzes ribosome-free peptidyl-tRNAs (with 1 or more amino acids incorporated), which drop off the ribosome during protein synthesis, or as a result of ribosome stalling. In terms of biological role, catalyzes the release of premature peptidyl moieties from peptidyl-tRNA molecules trapped in stalled 50S ribosomal subunits, and thus maintains levels of free tRNAs and 50S ribosomes. This chain is Peptidyl-tRNA hydrolase, found in Clostridium beijerinckii (strain ATCC 51743 / NCIMB 8052) (Clostridium acetobutylicum).